A 384-amino-acid polypeptide reads, in one-letter code: Tryptophan--tRNA ligase (384 aa).

A 'HIGH' region motif is present at residues 81-89 (PSGPMHIGH). The short motif at 252–256 (KMSAS) is the 'KMSKS' region element.

This sequence belongs to the class-I aminoacyl-tRNA synthetase family.

The protein localises to the cytoplasm. The catalysed reaction is tRNA(Trp) + L-tryptophan + ATP = L-tryptophyl-tRNA(Trp) + AMP + diphosphate + H(+). This is Tryptophan--tRNA ligase from Thermococcus kodakarensis (strain ATCC BAA-918 / JCM 12380 / KOD1) (Pyrococcus kodakaraensis (strain KOD1)).